Reading from the N-terminus, the 341-residue chain is Holliday junction branch migration complex subunit RuvB (341 aa).

A disordered region spans residues 1-22 (MSETAGKGVTMPEIMQSSYPDE). The tract at residues 4 to 193 (TAGKGVTMPE…FGIISRLEFY (190 aa)) is large ATPase domain (RuvB-L). Residues isoleucine 32, arginine 33, glycine 74, lysine 77, threonine 78, threonine 79, 140 to 142 (EDY), arginine 183, tyrosine 193, and arginine 230 contribute to the ATP site. Position 78 (threonine 78) interacts with Mg(2+). Residues 194 to 264 (TPEELSQIIL…LVNHALQKLD (71 aa)) are small ATPAse domain (RuvB-S). The segment at 267 to 341 (EKGLDQMDRK…KAYKHLNLTD (75 aa)) is head domain (RuvB-H). 2 residues coordinate DNA: arginine 322 and arginine 327.

This sequence belongs to the RuvB family. Homohexamer. Forms an RuvA(8)-RuvB(12)-Holliday junction (HJ) complex. HJ DNA is sandwiched between 2 RuvA tetramers; dsDNA enters through RuvA and exits via RuvB. An RuvB hexamer assembles on each DNA strand where it exits the tetramer. Each RuvB hexamer is contacted by two RuvA subunits (via domain III) on 2 adjacent RuvB subunits; this complex drives branch migration. In the full resolvosome a probable DNA-RuvA(4)-RuvB(12)-RuvC(2) complex forms which resolves the HJ.

The protein resides in the cytoplasm. The enzyme catalyses ATP + H2O = ADP + phosphate + H(+). In terms of biological role, the RuvA-RuvB-RuvC complex processes Holliday junction (HJ) DNA during genetic recombination and DNA repair, while the RuvA-RuvB complex plays an important role in the rescue of blocked DNA replication forks via replication fork reversal (RFR). RuvA specifically binds to HJ cruciform DNA, conferring on it an open structure. The RuvB hexamer acts as an ATP-dependent pump, pulling dsDNA into and through the RuvAB complex. RuvB forms 2 homohexamers on either side of HJ DNA bound by 1 or 2 RuvA tetramers; 4 subunits per hexamer contact DNA at a time. Coordinated motions by a converter formed by DNA-disengaged RuvB subunits stimulates ATP hydrolysis and nucleotide exchange. Immobilization of the converter enables RuvB to convert the ATP-contained energy into a lever motion, pulling 2 nucleotides of DNA out of the RuvA tetramer per ATP hydrolyzed, thus driving DNA branch migration. The RuvB motors rotate together with the DNA substrate, which together with the progressing nucleotide cycle form the mechanistic basis for DNA recombination by continuous HJ branch migration. Branch migration allows RuvC to scan DNA until it finds its consensus sequence, where it cleaves and resolves cruciform DNA. The sequence is that of Holliday junction branch migration complex subunit RuvB from Lawsonia intracellularis (strain PHE/MN1-00).